Consider the following 374-residue polypeptide: Glutamate 5-kinase (374 aa).

Lysine 9 provides a ligand contact to ATP. Substrate-binding residues include serine 49, aspartate 136, and asparagine 148. Residues 168–169 and 210–216 each bind ATP; these read TD and TGGMRSK. The PUA domain occupies 276–354; sequence SGTITVDSGA…EEARQYSYLH (79 aa).

This sequence belongs to the glutamate 5-kinase family.

The protein localises to the cytoplasm. It carries out the reaction L-glutamate + ATP = L-glutamyl 5-phosphate + ADP. The protein operates within amino-acid biosynthesis; L-proline biosynthesis; L-glutamate 5-semialdehyde from L-glutamate: step 1/2. Its function is as follows. Catalyzes the transfer of a phosphate group to glutamate to form L-glutamate 5-phosphate. The chain is Glutamate 5-kinase from Geobacillus thermodenitrificans (strain NG80-2).